The following is a 508-amino-acid chain: Glycerol kinase (508 aa).

Thr14 lines the ADP pocket. ATP is bound by residues Thr14, Thr15, and Ser16. Position 14 (Thr14) interacts with sn-glycerol 3-phosphate. Arg18 contributes to the ADP binding site. Sn-glycerol 3-phosphate is bound by residues Arg84, Glu85, and Tyr136. Glycerol contacts are provided by Arg84, Glu85, and Tyr136. His232 is modified (phosphohistidine; by HPr). Asp246 contacts sn-glycerol 3-phosphate. Asp246 and Gln247 together coordinate glycerol. ADP is bound by residues Thr268 and Gly311. Positions 268, 311, 315, and 412 each coordinate ATP. ADP-binding residues include Gly412 and Asn416.

Belongs to the FGGY kinase family. As to quaternary structure, homotetramer and homodimer (in equilibrium). The phosphoenolpyruvate-dependent sugar phosphotransferase system (PTS), including enzyme I, and histidine-containing protein (HPr) are required for the phosphorylation, which leads to the activation of the enzyme.

It catalyses the reaction glycerol + ATP = sn-glycerol 3-phosphate + ADP + H(+). Its pathway is polyol metabolism; glycerol degradation via glycerol kinase pathway; sn-glycerol 3-phosphate from glycerol: step 1/1. Its activity is regulated as follows. Activated by phosphorylation and inhibited by fructose 1,6-bisphosphate (FBP). Key enzyme in the regulation of glycerol uptake and metabolism. Catalyzes the phosphorylation of glycerol to yield sn-glycerol 3-phosphate. The protein is Glycerol kinase of Streptococcus pyogenes serotype M3 (strain ATCC BAA-595 / MGAS315).